Consider the following 90-residue polypeptide: Progonadoliberin-3 (90 aa).

Residues 1 to 23 (MEASSRVTVQVLLLALVVQVTLS) form the signal peptide. A Pyrrolidone carboxylic acid modification is found at Gln24. Gly33 is modified (glycine amide).

Belongs to the GnRH family.

The protein resides in the secreted. Stimulates the secretion of gonadotropins. The polypeptide is Progonadoliberin-3 (gnrh3) (Pagrus major (Red sea bream)).